A 627-amino-acid chain; its full sequence is Neutral endopeptidase (627 aa).

The 627-residue stretch at 1–627 (MTRIQDDLFA…RAPENRLKIW (627 aa)) folds into the Peptidase M13 domain. Histidine 475 contributes to the Zn(2+) binding site. Residue glutamate 476 is part of the active site. Zn(2+)-binding residues include histidine 479 and glutamate 535. Aspartate 539 (proton donor) is an active-site residue.

It belongs to the peptidase M13 family. As to quaternary structure, monomer. Zn(2+) is required as a cofactor.

It localises to the cytoplasm. Its function is as follows. Endopeptidase with broad substrate specificity for several oligopeptides. The polypeptide is Neutral endopeptidase (pepO) (Lactococcus lactis subsp. cremoris (Streptococcus cremoris)).